Consider the following 100-residue polypeptide: Small ribosomal subunit protein uS14 (100 aa).

The protein belongs to the universal ribosomal protein uS14 family. Part of the 30S ribosomal subunit. Contacts proteins S3 and S10.

In terms of biological role, binds 16S rRNA, required for the assembly of 30S particles and may also be responsible for determining the conformation of the 16S rRNA at the A site. This chain is Small ribosomal subunit protein uS14, found in Trichodesmium erythraeum (strain IMS101).